Here is a 145-residue protein sequence, read N- to C-terminus: D-aminoacyl-tRNA deacylase (145 aa).

The short motif at 137-138 (GP) is the Gly-cisPro motif, important for rejection of L-amino acids element.

This sequence belongs to the DTD family. Homodimer.

It is found in the cytoplasm. The catalysed reaction is glycyl-tRNA(Ala) + H2O = tRNA(Ala) + glycine + H(+). The enzyme catalyses a D-aminoacyl-tRNA + H2O = a tRNA + a D-alpha-amino acid + H(+). An aminoacyl-tRNA editing enzyme that deacylates mischarged D-aminoacyl-tRNAs. Also deacylates mischarged glycyl-tRNA(Ala), protecting cells against glycine mischarging by AlaRS. Acts via tRNA-based rather than protein-based catalysis; rejects L-amino acids rather than detecting D-amino acids in the active site. By recycling D-aminoacyl-tRNA to D-amino acids and free tRNA molecules, this enzyme counteracts the toxicity associated with the formation of D-aminoacyl-tRNA entities in vivo and helps enforce protein L-homochirality. This is D-aminoacyl-tRNA deacylase from Cereibacter sphaeroides (strain KD131 / KCTC 12085) (Rhodobacter sphaeroides).